A 186-amino-acid polypeptide reads, in one-letter code: Lipoprotein signal peptidase (186 aa).

Transmembrane regions (helical) follow at residues 8-28 (FFSV…FLDL), 44-64 (IPVL…FVFG), 66-86 (FQDN…FLIF), and 97-117 (AWGW…KFFV). Active-site residues include D142 and D164. The helical transmembrane segment at 157-177 (WPAFNVADSCVSIGIVILLFT) threads the bilayer.

It belongs to the peptidase A8 family.

The protein localises to the cell inner membrane. It catalyses the reaction Release of signal peptides from bacterial membrane prolipoproteins. Hydrolyzes -Xaa-Yaa-Zaa-|-(S,diacylglyceryl)Cys-, in which Xaa is hydrophobic (preferably Leu), and Yaa (Ala or Ser) and Zaa (Gly or Ala) have small, neutral side chains.. It participates in protein modification; lipoprotein biosynthesis (signal peptide cleavage). In terms of biological role, this protein specifically catalyzes the removal of signal peptides from prolipoproteins. The sequence is that of Lipoprotein signal peptidase from Leptospira biflexa serovar Patoc (strain Patoc 1 / ATCC 23582 / Paris).